The chain runs to 480 residues: Ribulose bisphosphate carboxylase large chain (480 aa).

A propeptide spanning residues M1–S2 is cleaved from the precursor. P3 carries the N-acetylproline modification. Position 14 is an N6,N6,N6-trimethyllysine (K14). Substrate contacts are provided by N123 and T173. K175 (proton acceptor) is an active-site residue. K177 serves as a coordination point for substrate. The Mg(2+) site is built by K201, D203, and E204. The residue at position 201 (K201) is an N6-carboxylysine. H294 serves as the catalytic Proton acceptor. Residues R295, H327, and S379 each contribute to the substrate site.

The protein belongs to the RuBisCO large chain family. Type I subfamily. Heterohexadecamer of 8 large chains and 8 small chains; disulfide-linked. The disulfide link is formed within the large subunit homodimers. The cofactor is Mg(2+). In terms of processing, the disulfide bond which can form in the large chain dimeric partners within the hexadecamer appears to be associated with oxidative stress and protein turnover.

The protein resides in the plastid. Its subcellular location is the chloroplast. The enzyme catalyses 2 (2R)-3-phosphoglycerate + 2 H(+) = D-ribulose 1,5-bisphosphate + CO2 + H2O. The catalysed reaction is D-ribulose 1,5-bisphosphate + O2 = 2-phosphoglycolate + (2R)-3-phosphoglycerate + 2 H(+). In terms of biological role, ruBisCO catalyzes two reactions: the carboxylation of D-ribulose 1,5-bisphosphate, the primary event in carbon dioxide fixation, as well as the oxidative fragmentation of the pentose substrate in the photorespiration process. Both reactions occur simultaneously and in competition at the same active site. The protein is Ribulose bisphosphate carboxylase large chain of Basella alba (Malabar spinach).